Reading from the N-terminus, the 364-residue chain is DNA replication and repair protein RecF (364 aa).

30 to 37 (GNNAQGKT) is a binding site for ATP.

It belongs to the RecF family.

Its subcellular location is the cytoplasm. Its function is as follows. The RecF protein is involved in DNA metabolism; it is required for DNA replication and normal SOS inducibility. RecF binds preferentially to single-stranded, linear DNA. It also seems to bind ATP. This chain is DNA replication and repair protein RecF, found in Clostridium botulinum (strain ATCC 19397 / Type A).